The sequence spans 116 residues: Flagellar transcriptional regulator FlhD (116 aa).

This sequence belongs to the FlhD family. In terms of assembly, homodimer; disulfide-linked. Forms a heterohexamer composed of two FlhC and four FlhD subunits. Each FlhC binds a FlhD dimer, forming a heterotrimer, and a hexamer assembles by dimerization of two heterotrimers.

It localises to the cytoplasm. Its function is as follows. Functions in complex with FlhC as a master transcriptional regulator that regulates transcription of several flagellar and non-flagellar operons by binding to their promoter region. Activates expression of class 2 flagellar genes, including fliA, which is a flagellum-specific sigma factor that turns on the class 3 genes. Also regulates genes whose products function in a variety of physiological pathways. The sequence is that of Flagellar transcriptional regulator FlhD from Yersinia pseudotuberculosis serotype O:1b (strain IP 31758).